Consider the following 192-residue polypeptide: MLPYEMVIAVLVYLSPAQILNLNLPFAYQKSVLFASNSAKVNERIRRRARDDNDDDPYFYYKQFIKINFLTKKIINVYNKTEKCIRATFDGRYVVTRDVLMCFVNKSYMKQLLREVDTRITLQQLVKMYSPEFGFYVNSKIMFVLTESVLASICLKHSFGKCEWLDKNIKTVCLQLRKICINNKQHSTCLSY.

Its function is as follows. Plays a role in the expression of ORF41, which itself is required for late gene expression. This is Protein ORF45 from Autographa californica nuclear polyhedrosis virus (AcMNPV).